The sequence spans 116 residues: Putative UPF0320 protein YJR162C (116 aa).

The protein belongs to the UPF0320 family.

In Saccharomyces cerevisiae (strain ATCC 204508 / S288c) (Baker's yeast), this protein is Putative UPF0320 protein YJR162C.